Here is an 898-residue protein sequence, read N- to C-terminus: Netrin receptor UNC5A (898 aa).

The first 25 residues, 1–25 (MAVRPGLWPVLLGIVLAAWLRGSGA), serve as a signal peptide directing secretion. At 26–361 (QQSATVANPV…TASCPEDVAL (336 aa)) the chain is on the extracellular side. The Ig-like domain occupies 44–141 (PHFLVEPEDV…SGTTKSQKAY (98 aa)). Cystine bridges form between cysteine 65-cysteine 126, cysteine 77-cysteine 124, and cysteine 170-cysteine 221. 2 N-linked (GlcNAc...) asparagine glycosylation sites follow: asparagine 107 and asparagine 218. An Ig-like C2-type domain is found at 155-238 (PLAKEVSLEQ…RRRSTSAAVI (84 aa)). 2 TSP type-1 domains span residues 242-296 (NGGW…TLCP) and 298-350 (DGSW…DLCL). C-linked (Man) tryptophan glycans are attached at residues tryptophan 245, tryptophan 248, and tryptophan 251. 3 disulfide bridges follow: cysteine 254/cysteine 291, cysteine 258/cysteine 295, and cysteine 269/cysteine 281. C-linked (Man) tryptophan glycosylation is found at tryptophan 301 and tryptophan 304. 3 disulfide bridges follow: cysteine 310/cysteine 344, cysteine 314/cysteine 349, and cysteine 322/cysteine 334. The N-linked (GlcNAc...) asparagine glycan is linked to asparagine 343. The helical transmembrane segment at 362–382 (YIGLVAVAVCLFLLLLALGLI) threads the bilayer. Residues 383–898 (YCRKKEGLDS…GLFTVSEAEC (516 aa)) are Cytoplasmic-facing. Residues 497 to 640 (NMAYGTFNFL…LGRFALVGEA (144 aa)) form the ZU5 domain. The interval 661-679 (SLEYNIRVYCLHDTHDALK) is interaction with DCC. Positions 817–897 (QKIIASLDPP…AGLFTVSEAE (81 aa)) constitute a Death domain.

This sequence belongs to the unc-5 family. Homodimer and homooligomer. Interacts with the cytoplasmic part of DCC. Interacts with MAGED1. Interacts with PRKCABP, possibly mediating some interaction with PKC. Interacts (via extracellular domain) with FLRT2 (via extracellular domain). Interacts (via extracellular domain) with FLRT3 (via extracellular domain). Phosphorylated on cytoplasmic tyrosine residues. Phosphorylated by PKC in vitro. Post-translationally, proteolytically cleaved by caspases during apoptosis. The cleavage does not take place when the receptor is associated with netrin ligand. Its cleavage by caspases is required to induce apoptosis. In terms of processing, the two extracellular TSRs of UNC5A contain WxxWxxWxxC motifs that can be C-mannosylated on all tryptophans. DPY19L1 preferentially mannosylates the first two tryptophans and DPY19L3 prefers the third. C-mannosylation by DPY19L1 is required for transport of UNC5A from the endoplasmic reticulum to the cell surface. Mainly expressed in regions of differentiating neurons. Expressed at early stages of neural tube development in the ventral spinal cord. In developing hindbrain, it colocalizes with a number of cranial motor neuron subpopulations from embryonic E11 to E14, while DCC is expressed by motor neurons at E12. Also expressed in non-neural structures, such as the basal plane of the hindbrain and midbrain, in the developing hypothalamus, thalamus and in the pallidum.

It is found in the cell membrane. The protein resides in the membrane raft. The protein localises to the cell projection. Its subcellular location is the neuron projection. Its function is as follows. Receptor for netrin required for axon guidance. Functions in the netrin signaling pathway and promotes neurite outgrowth in response to NTN1. Mediates axon repulsion of neuronal growth cones in the developing nervous system in response to netrin. Axon repulsion in growth cones may be mediated by its association with DCC that may trigger signaling for repulsion. It also acts as a dependence receptor required for apoptosis induction when not associated with netrin ligand. This Rattus norvegicus (Rat) protein is Netrin receptor UNC5A (Unc5a).